Reading from the N-terminus, the 348-residue chain is MTENYAAVLHGANDVRIEKIPVPEINDDEVLIKIDCVGICGSDVKLYSTGTCGADVIDKPIVIGHEGAGTVVKVGDKVSSLRVGDRVAIEPTQPCRSCELCKRGKYNLCVEPRYCSSMGAPGNLCRYYKHVADFCHKLPDNLTMEEGAAVQPLAIVIHACNRAKITLGSKIVILGAGPIGILCAMSAKAMGASKIILTDVVQSRLDAALELGADNVLLVRREYTDEEVVEKIVKLLGDRPDVSIDACGYGSAQRVALLVTKTAGLVLVVGIADKTVELPLSQALLREVDVVGSFRIMNTYQPALAAVSSGAIPLDKFITHRFPLNKTKEALDLAKSGAAMKILIHVQN.

Zn(2+)-binding residues include cysteine 40, histidine 65, and glutamate 66. Residues isoleucine 179, aspartate 199, arginine 204, 269–271 (VGI), and 293–295 (SFR) contribute to the NAD(+) site. Arginine 295 is a binding site for substrate.

It belongs to the zinc-containing alcohol dehydrogenase family. As to quaternary structure, homotetramer. It depends on Zn(2+) as a cofactor.

It catalyses the reaction xylitol + NAD(+) = D-xylulose + NADH + H(+). It carries out the reaction L-iditol + NAD(+) = keto-L-sorbose + NADH + H(+). The catalysed reaction is keto-D-fructose + NADH + H(+) = D-sorbitol + NAD(+). Polyol dehydrogenase that catalyzes the reversible NAD(+)-dependent oxidation of various sugar alcohols. Is active with xylitol, L-iditol and D-sorbitol (D-glucitol) as substrates, leading to the C2-oxidized products D-xylulose, L-sorbose and D-fructose, respectively. Is a key enzyme in the polyol pathway that interconverts glucose and fructose via sorbitol, which constitutes an important alternate route for glucose metabolism. The chain is Sorbitol dehydrogenase (SDH) from Bombyx mori (Silk moth).